The chain runs to 325 residues: Putative S-adenosyl-L-methionine-dependent methyltransferase MT0917 (325 aa).

S-adenosyl-L-methionine is bound by residues D126 and 155 to 156 (DL).

The protein belongs to the UPF0677 family.

Functionally, exhibits S-adenosyl-L-methionine-dependent methyltransferase activity. The sequence is that of Putative S-adenosyl-L-methionine-dependent methyltransferase MT0917 from Mycobacterium tuberculosis (strain CDC 1551 / Oshkosh).